Consider the following 246-residue polypeptide: Ribonuclease PH (246 aa).

Phosphate contacts are provided by residues R91 and G129–R131.

This sequence belongs to the RNase PH family. As to quaternary structure, homohexameric ring arranged as a trimer of dimers.

The enzyme catalyses tRNA(n+1) + phosphate = tRNA(n) + a ribonucleoside 5'-diphosphate. Functionally, phosphorolytic 3'-5' exoribonuclease that plays an important role in tRNA 3'-end maturation. Removes nucleotide residues following the 3'-CCA terminus of tRNAs; can also add nucleotides to the ends of RNA molecules by using nucleoside diphosphates as substrates, but this may not be physiologically important. Probably plays a role in initiation of 16S rRNA degradation (leading to ribosome degradation) during starvation. The protein is Ribonuclease PH of Paraburkholderia phymatum (strain DSM 17167 / CIP 108236 / LMG 21445 / STM815) (Burkholderia phymatum).